An 824-amino-acid polypeptide reads, in one-letter code: Leucine--tRNA ligase (824 aa).

The 'HIGH' region motif lies at 42–52; sequence PYPSGRIHMGH. The short motif at 581–585 is the 'KMSKS' region element; the sequence is KMSKS. Lys584 serves as a coordination point for ATP.

The protein belongs to the class-I aminoacyl-tRNA synthetase family.

The protein resides in the cytoplasm. It catalyses the reaction tRNA(Leu) + L-leucine + ATP = L-leucyl-tRNA(Leu) + AMP + diphosphate. The polypeptide is Leucine--tRNA ligase (Geobacter metallireducens (strain ATCC 53774 / DSM 7210 / GS-15)).